Here is a 634-residue protein sequence, read N- to C-terminus: Chaperone protein dnaK2 (634 aa).

T197 carries the phosphothreonine; by autocatalysis modification. A compositionally biased stretch (low complexity) spans 601 to 623 (GAAAAESGADAGAAGAGDSSSGD). Residues 601–634 (GAAAAESGADAGAAGAGDSSSGDDVIDAEFTESK) form a disordered region. The span at 624 to 634 (DVIDAEFTESK) shows a compositional bias: acidic residues.

It belongs to the heat shock protein 70 family.

In terms of biological role, acts as a chaperone. This Prochlorococcus marinus (strain MIT 9313) protein is Chaperone protein dnaK2 (dnaK2).